Consider the following 481-residue polypeptide: F-box/LRR-repeat protein At3g03360 (481 aa).

The segment at 1-28 (MEKESQENSTRPDASSTVFSSSKSTCAS) is disordered. Residues 14–28 (ASSTVFSSSKSTCAS) show a composition bias toward low complexity. An F-box domain is found at 36–84 (GDLISRLPDDILQLILSYLPTRLAIKTSVLSRRWRHVWSDTWSLSFHRD). 5 LRR repeats span residues 118–145 (SRPD…SLYL), 196–221 (HCNI…LLFF), 295–320 (EADF…TLGA), 350–375 (ISRY…TIHP), and 413–439 (RRNV…ELIV).

The chain is F-box/LRR-repeat protein At3g03360 from Arabidopsis thaliana (Mouse-ear cress).